A 275-amino-acid polypeptide reads, in one-letter code: MGSSGMKLVVVGAAGRMGQALIRLIHQTPGVQLHAAVAREGSAFVGRDAGEIAGLGPIGIEITSDPLQAFLHAEGVIDFTSPATSITFAGLAAQARIVHVVGTTGCSPQDEEKFKAASRHARIVKSGNMSLGVNLLSVLTQQAAQALDAQNWDIEILEMHHKHKVDAPSGTALLLGEAAAAGRKVDLTAASVRVRDGHTGAREAGTIGFATLRGGSVIGEHSVIFAGEGERVELSHYAGDRSIFARGAITAAVWAFDKKPGFYSMLDVLGLSQAE.

12–17 (GAAGRM) serves as a coordination point for NAD(+). R39 contributes to the NADP(+) binding site. NAD(+) contacts are provided by residues 102–104 (GTT) and 126–129 (SGNM). The active-site Proton donor/acceptor is H160. H161 is a binding site for (S)-2,3,4,5-tetrahydrodipicolinate. The active-site Proton donor is K164. (S)-2,3,4,5-tetrahydrodipicolinate is bound at residue 170–171 (GT).

Belongs to the DapB family.

It localises to the cytoplasm. It catalyses the reaction (S)-2,3,4,5-tetrahydrodipicolinate + NAD(+) + H2O = (2S,4S)-4-hydroxy-2,3,4,5-tetrahydrodipicolinate + NADH + H(+). The enzyme catalyses (S)-2,3,4,5-tetrahydrodipicolinate + NADP(+) + H2O = (2S,4S)-4-hydroxy-2,3,4,5-tetrahydrodipicolinate + NADPH + H(+). The protein operates within amino-acid biosynthesis; L-lysine biosynthesis via DAP pathway; (S)-tetrahydrodipicolinate from L-aspartate: step 4/4. In terms of biological role, catalyzes the conversion of 4-hydroxy-tetrahydrodipicolinate (HTPA) to tetrahydrodipicolinate. The chain is 4-hydroxy-tetrahydrodipicolinate reductase from Agrobacterium fabrum (strain C58 / ATCC 33970) (Agrobacterium tumefaciens (strain C58)).